Consider the following 236-residue polypeptide: Large ribosomal subunit protein uL2 (236 aa).

Polar residues predominate over residues methionine 1–arginine 10. Disordered stretches follow at residues methionine 1–proline 20 and glycine 202–arginine 236. A compositionally biased stretch (basic residues) spans lysine 224–arginine 236.

This sequence belongs to the universal ribosomal protein uL2 family. In terms of assembly, part of the 50S ribosomal subunit. Forms a bridge to the 30S subunit in the 70S ribosome.

Its function is as follows. One of the primary rRNA binding proteins. Required for association of the 30S and 50S subunits to form the 70S ribosome, for tRNA binding and peptide bond formation. It has been suggested to have peptidyltransferase activity; this is somewhat controversial. Makes several contacts with the 16S rRNA in the 70S ribosome. This chain is Large ribosomal subunit protein uL2, found in Methanospirillum hungatei JF-1 (strain ATCC 27890 / DSM 864 / NBRC 100397 / JF-1).